The sequence spans 426 residues: Ornithine aminotransferase (426 aa).

The residue at position 291 (Lys291) is an N6-(pyridoxal phosphate)lysine.

Belongs to the class-III pyridoxal-phosphate-dependent aminotransferase family. Pyridoxal 5'-phosphate serves as cofactor.

The enzyme catalyses a 2-oxocarboxylate + L-ornithine = L-glutamate 5-semialdehyde + an L-alpha-amino acid. It participates in amino-acid biosynthesis; L-proline biosynthesis; L-glutamate 5-semialdehyde from L-ornithine: step 1/1. This chain is Ornithine aminotransferase, found in Vigna aconitifolia (Moth bean).